A 275-amino-acid polypeptide reads, in one-letter code: F420-dependent methylenetetrahydromethanopterin dehydrogenase (275 aa).

Belongs to the MTD family.

It catalyses the reaction 5,10-methylenetetrahydromethanopterin + oxidized coenzyme F420-(gamma-L-Glu)(n) + 2 H(+) = 5,10-methenyl-5,6,7,8-tetrahydromethanopterin + reduced coenzyme F420-(gamma-L-Glu)(n). It participates in one-carbon metabolism; methanogenesis from CO(2); 5,10-methylene-5,6,7,8-tetrahydromethanopterin from 5,10-methenyl-5,6,7,8-tetrahydromethanopterin (coenzyme F420 route): step 1/1. Its function is as follows. Catalyzes the reversible reduction of methenyl-H(4)MPT(+) to methylene-H(4)MPT. The chain is F420-dependent methylenetetrahydromethanopterin dehydrogenase from Methanobrevibacter smithii (strain ATCC 35061 / DSM 861 / OCM 144 / PS).